We begin with the raw amino-acid sequence, 236 residues long: Leucyl/phenylalanyl-tRNA--protein transferase (236 aa).

It belongs to the L/F-transferase family.

It is found in the cytoplasm. It catalyses the reaction N-terminal L-lysyl-[protein] + L-leucyl-tRNA(Leu) = N-terminal L-leucyl-L-lysyl-[protein] + tRNA(Leu) + H(+). The enzyme catalyses N-terminal L-arginyl-[protein] + L-leucyl-tRNA(Leu) = N-terminal L-leucyl-L-arginyl-[protein] + tRNA(Leu) + H(+). The catalysed reaction is L-phenylalanyl-tRNA(Phe) + an N-terminal L-alpha-aminoacyl-[protein] = an N-terminal L-phenylalanyl-L-alpha-aminoacyl-[protein] + tRNA(Phe). Functionally, functions in the N-end rule pathway of protein degradation where it conjugates Leu, Phe and, less efficiently, Met from aminoacyl-tRNAs to the N-termini of proteins containing an N-terminal arginine or lysine. The sequence is that of Leucyl/phenylalanyl-tRNA--protein transferase from Shewanella pealeana (strain ATCC 700345 / ANG-SQ1).